A 636-amino-acid chain; its full sequence is Transcription termination factor FttA (636 aa).

The KHa stretch occupies residues 4–72 (ELELKRIRDE…VVFRWNVDKR (69 aa)). A KHb region spans residues 73–140 (KDPAETKDYI…WQPKTIRTPP (68 aa)). The metallo-beta-lactamase N-terminus stretch occupies residues 181-383 (NIRMNALGGF…LLIEATYGGP (203 aa)). Residues His242, His244, Asp246, His247, His329, and Asp352 each coordinate Zn(2+). Residues 384–577 (QDRIPSRQES…LKVFTLEGFS (194 aa)) are beta-Casp. A metallo-beta-lactamase C-terminus region spans residues 578–636 (GHSSRSQISQFLRRIQPRPKVVIVNHGEESKCVSLSTMIHKKLRKSTKSPKNLEVVLLK). His603 lines the Zn(2+) pocket.

Belongs to the metallo-beta-lactamase superfamily. RNA-metabolizing metallo-beta-lactamase-like family. FttA subfamily. In terms of assembly, homodimer. Interacts with RNA polymerase (RNAP), interacts with the Spt4-Spt5 complex. Zn(2+) serves as cofactor.

In terms of biological role, terminates transcription on the whole genome. Termination is linked to FttA-mediated RNA cleavage and does not require NTP hydrolysis. Cleaves endonucleolytically at the RNA exit channel of RNA polymerase (RNAP); the 5'-3' exonuclease activity of this protein degrades the nascent RNA released from RNAP. Terminates transcription genome-wide in M.maripaludis. Restores wild-type growth to a strain of Methanococcus maripaludis depleted for this gene at 22 degrees Celsius and prevents transcriptional read-through. Transcription termination is most effective in vivo on RNAs with more than one U4-tract in their 3'-ends. Has endonuclease activity after U-rich tracts in transcription termination sequences. This is Transcription termination factor FttA from Lokiarchaeum sp. (strain GC14_75).